A 123-amino-acid polypeptide reads, in one-letter code: Small ribosomal subunit protein uS12 (123 aa).

Position 89 is a 3-methylthioaspartic acid (aspartate 89). The tract at residues 101-123 is disordered; that stretch reads TLDTQGVKDRRQRRSKYGAKRPK. Residues 110-123 show a composition bias toward basic residues; it reads RRQRRSKYGAKRPK.

This sequence belongs to the universal ribosomal protein uS12 family. In terms of assembly, part of the 30S ribosomal subunit. Contacts proteins S8 and S17. May interact with IF1 in the 30S initiation complex.

With S4 and S5 plays an important role in translational accuracy. Its function is as follows. Interacts with and stabilizes bases of the 16S rRNA that are involved in tRNA selection in the A site and with the mRNA backbone. Located at the interface of the 30S and 50S subunits, it traverses the body of the 30S subunit contacting proteins on the other side and probably holding the rRNA structure together. The combined cluster of proteins S8, S12 and S17 appears to hold together the shoulder and platform of the 30S subunit. This is Small ribosomal subunit protein uS12 from Paramagnetospirillum magneticum (strain ATCC 700264 / AMB-1) (Magnetospirillum magneticum).